The chain runs to 144 residues: MKTVFVLNGPNLNALGKREPGIYGGKTLAAIADDCKQAGASLGLGIDFRQSNHEGDLVDWIQEAGDKAAGIVINPGAYSHTSIAIHDAIRSIAPLPVAEVHLSNIHARESFRHVSMVAPVAVGMICGFGPLGYTLALQALAARL.

Y23 functions as the Proton acceptor in the catalytic mechanism. 3 residues coordinate substrate: N74, H80, and D87. The active-site Proton donor is H101. Substrate is bound by residues L102 to S103 and R112.

Belongs to the type-II 3-dehydroquinase family. In terms of assembly, homododecamer.

It carries out the reaction 3-dehydroquinate = 3-dehydroshikimate + H2O. The protein operates within metabolic intermediate biosynthesis; chorismate biosynthesis; chorismate from D-erythrose 4-phosphate and phosphoenolpyruvate: step 3/7. Functionally, catalyzes a trans-dehydration via an enolate intermediate. The sequence is that of 3-dehydroquinate dehydratase from Mesorhizobium japonicum (strain LMG 29417 / CECT 9101 / MAFF 303099) (Mesorhizobium loti (strain MAFF 303099)).